A 258-amino-acid polypeptide reads, in one-letter code: Glucosamine-6-phosphate deaminase (258 aa).

Catalysis depends on Asp-65, which acts as the Proton acceptor; for enolization step. The active-site For ring-opening step is the Asp-134. The active-site Proton acceptor; for ring-opening step is the His-136. Glu-141 serves as the catalytic For ring-opening step.

This sequence belongs to the glucosamine/galactosamine-6-phosphate isomerase family. NagB subfamily.

The catalysed reaction is alpha-D-glucosamine 6-phosphate + H2O = beta-D-fructose 6-phosphate + NH4(+). Its pathway is amino-sugar metabolism; N-acetylneuraminate degradation; D-fructose 6-phosphate from N-acetylneuraminate: step 5/5. In terms of biological role, catalyzes the reversible isomerization-deamination of glucosamine 6-phosphate (GlcN6P) to form fructose 6-phosphate (Fru6P) and ammonium ion. This chain is Glucosamine-6-phosphate deaminase, found in Corynebacterium kroppenstedtii (strain DSM 44385 / JCM 11950 / CIP 105744 / CCUG 35717).